Reading from the N-terminus, the 85-residue chain is UPF0181 protein YPTS_1774 (85 aa).

Residues 57 to 72 are compositionally biased toward basic and acidic residues; that stretch reads DHDFDEHTESDYRRDD. The disordered stretch occupies residues 57–85; it reads DHDFDEHTESDYRRDDEPDADDIEDLYEG. Acidic residues predominate over residues 73–85; it reads EPDADDIEDLYEG.

The protein belongs to the UPF0181 family.

In Yersinia pseudotuberculosis serotype IB (strain PB1/+), this protein is UPF0181 protein YPTS_1774.